A 691-amino-acid polypeptide reads, in one-letter code: POU domain, class 6, transcription factor 2 (691 aa).

A compositionally biased stretch (basic and acidic residues) spans Met25–Ala36. Disordered stretches follow at residues Met25–Pro93, Leu186–Val297, and Ser435–Ser461. Low complexity predominate over residues Leu186–Gln195. Residues Gln196–Gln210 are compositionally biased toward pro residues. A compositionally biased stretch (low complexity) spans Ala211–Leu220. The span at Gln221 to Pro238 shows a compositional bias: pro residues. 2 stretches are compositionally biased toward low complexity: residues Thr239–Pro280 and Ser438–Ser461. A POU-specific domain is found at Val476–Glu586. The homeobox DNA-binding region spans Lys607–Ile666.

Belongs to the POU transcription factor family. Class-6 subfamily. Expressed only within the CNS, where its expression is restricted to the medical habenulla, to a dispersed population of neurons in the dorsal hypothalamus, and to subsets of ganglion and amacrine cells in the retina.

It is found in the nucleus. Its function is as follows. Probable transcription factor likely to be involved in early steps in the differentiation of amacrine and ganglion cells. Recognizes and binds to the DNA sequence 5'-ATGCAAAT-3'. Isoform 1 does not bind DNA. The protein is POU domain, class 6, transcription factor 2 (POU6F2) of Homo sapiens (Human).